A 292-amino-acid polypeptide reads, in one-letter code: Phosphatidylserine decarboxylase proenzyme (292 aa).

Residues aspartate 92, histidine 149, and serine 255 each act as charge relay system; for autoendoproteolytic cleavage activity in the active site. Catalysis depends on serine 255, which acts as the Schiff-base intermediate with substrate; via pyruvic acid; for decarboxylase activity. A Pyruvic acid (Ser); by autocatalysis modification is found at serine 255.

The protein belongs to the phosphatidylserine decarboxylase family. PSD-B subfamily. Prokaryotic type I sub-subfamily. As to quaternary structure, heterodimer of a large membrane-associated beta subunit and a small pyruvoyl-containing alpha subunit. Requires pyruvate as cofactor. Post-translationally, is synthesized initially as an inactive proenzyme. Formation of the active enzyme involves a self-maturation process in which the active site pyruvoyl group is generated from an internal serine residue via an autocatalytic post-translational modification. Two non-identical subunits are generated from the proenzyme in this reaction, and the pyruvate is formed at the N-terminus of the alpha chain, which is derived from the carboxyl end of the proenzyme. The autoendoproteolytic cleavage occurs by a canonical serine protease mechanism, in which the side chain hydroxyl group of the serine supplies its oxygen atom to form the C-terminus of the beta chain, while the remainder of the serine residue undergoes an oxidative deamination to produce ammonia and the pyruvoyl prosthetic group on the alpha chain. During this reaction, the Ser that is part of the protease active site of the proenzyme becomes the pyruvoyl prosthetic group, which constitutes an essential element of the active site of the mature decarboxylase.

The protein localises to the cell membrane. The enzyme catalyses a 1,2-diacyl-sn-glycero-3-phospho-L-serine + H(+) = a 1,2-diacyl-sn-glycero-3-phosphoethanolamine + CO2. The protein operates within phospholipid metabolism; phosphatidylethanolamine biosynthesis; phosphatidylethanolamine from CDP-diacylglycerol: step 2/2. Functionally, catalyzes the formation of phosphatidylethanolamine (PtdEtn) from phosphatidylserine (PtdSer). The protein is Phosphatidylserine decarboxylase proenzyme of Idiomarina loihiensis (strain ATCC BAA-735 / DSM 15497 / L2-TR).